A 245-amino-acid chain; its full sequence is Myelin protein P0 (245 aa).

Residues 1–28 form the signal peptide; that stretch reads MEPSGLRTPCSLLALVLLSALVLTPTLA. The Ig-like V-type domain occupies 29-143; sequence IEVYTDREVY…VGKSSYVHLQ (115 aa). Residues 29 to 153 lie on the Extracellular side of the membrane; that stretch reads IEVYTDREVY…VQEKGPARAG (125 aa). A disulfide bridge links Cys-49 with Cys-125. Asn-120 carries an N-linked (GlcNAc...) asparagine glycan. The chain crosses the membrane as a helical span at residues 154 to 174; the sequence is LILGIIIAVALALVIVVTILI. Residues 175-245 are Cytoplasmic-facing; it reads LLIRYCWLRR…GIGDSRKDRK (71 aa). Composition is skewed to basic and acidic residues over residues 199 to 208 and 224 to 245; these read KLHKAKDSSK and TRGK…KDRK. The segment at 199 to 245 is disordered; the sequence is KLHKAKDSSKRSSRQTPILYAMLDQTRGKSSEKKAKGGIGDSRKDRK.

Belongs to the myelin P0 protein family.

It localises to the cell membrane. Its function is as follows. Creation of an extracellular membrane face which guides the wrapping process and ultimately compacts adjacent lamellae. The protein is Myelin protein P0 (mpz) of Xenopus laevis (African clawed frog).